The following is a 499-amino-acid chain: Probable alkaline/neutral invertase F (499 aa).

Phosphoserine is present on Ser-11. Thr-20 bears the Phosphothreonine mark. Ser-497 is subject to Phosphoserine.

Belongs to the glycosyl hydrolase 100 family.

The catalysed reaction is Hydrolysis of terminal non-reducing beta-D-fructofuranoside residues in beta-D-fructofuranosides.. In terms of biological role, invertase that cleaves sucrose into glucose and fructose. The polypeptide is Probable alkaline/neutral invertase F (Arabidopsis thaliana (Mouse-ear cress)).